Reading from the N-terminus, the 438-residue chain is Adenylyltransferase and sulfurtransferase MOCS3 (438 aa).

ATP-binding positions include glycine 80, aspartate 101, 108-112, lysine 125, and 169-170; these read TNLHR and DN. Zn(2+) is bound by residues cysteine 210 and cysteine 213. Cysteine 227 (glycyl thioester intermediate; for adenylyltransferase activity) is an active-site residue. The Zn(2+) site is built by cysteine 285 and cysteine 288. Positions 335–436 constitute a Rhodanese domain; it reads SKQRHVLVDV…WTRNVDKEFP (102 aa). Catalysis depends on cysteine 392, which acts as the Cysteine persulfide intermediate; for sulfurtransferase activity.

In the N-terminal section; belongs to the HesA/MoeB/ThiF family. UBA4 subfamily. Requires Zn(2+) as cofactor.

The protein localises to the cytoplasm. It localises to the cytosol. It carries out the reaction [molybdopterin-synthase sulfur-carrier protein]-C-terminal Gly-Gly + ATP + H(+) = [molybdopterin-synthase sulfur-carrier protein]-C-terminal Gly-Gly-AMP + diphosphate. It catalyses the reaction [molybdopterin-synthase sulfur-carrier protein]-C-terminal Gly-Gly-AMP + S-sulfanyl-L-cysteinyl-[cysteine desulfurase] + AH2 = [molybdopterin-synthase sulfur-carrier protein]-C-terminal-Gly-aminoethanethioate + L-cysteinyl-[cysteine desulfurase] + A + AMP + 2 H(+). It functions in the pathway tRNA modification; 5-methoxycarbonylmethyl-2-thiouridine-tRNA biosynthesis. The protein operates within cofactor biosynthesis; molybdopterin biosynthesis. Functionally, plays a central role in 2-thiolation of mcm(5)S(2)U at tRNA wobble positions of cytosolic tRNA(Lys), tRNA(Glu) and tRNA(Gln). Also essential during biosynthesis of the molybdenum cofactor. Acts by mediating the C-terminal thiocarboxylation of sulfur carriers URM1 and MOCS2A. Its N-terminus first activates URM1 and MOCS2A as acyl-adenylates (-COAMP), then the persulfide sulfur on the catalytic cysteine is transferred to URM1 and MOCS2A to form thiocarboxylation (-COSH) of their C-terminus. The reaction probably involves hydrogen sulfide that is generated from the persulfide intermediate and that acts as a nucleophile towards URM1 and MOCS2A. Subsequently, a transient disulfide bond is formed. Does not use thiosulfate as sulfur donor; NFS1 probably acting as a sulfur donor for thiocarboxylation reactions. This is Adenylyltransferase and sulfurtransferase MOCS3 from Culex quinquefasciatus (Southern house mosquito).